Consider the following 164-residue polypeptide: Endoribonuclease YbeY (164 aa).

3 residues coordinate Zn(2+): H117, H121, and H127.

This sequence belongs to the endoribonuclease YbeY family. The cofactor is Zn(2+).

It is found in the cytoplasm. Its function is as follows. Single strand-specific metallo-endoribonuclease involved in late-stage 70S ribosome quality control and in maturation of the 3' terminus of the 16S rRNA. The protein is Endoribonuclease YbeY of Mycoplasma capricolum subsp. capricolum (strain California kid / ATCC 27343 / NCTC 10154).